A 369-amino-acid polypeptide reads, in one-letter code: UDP-glucose 4-epimerase 4 (369 aa).

Residue 19-50 (TVLVTGGAGYIGSHTVLQLLAAGFRVVVADSL) coordinates NAD(+). Residue Ser-144 coordinates substrate. The active-site Proton acceptor is the Tyr-168.

Belongs to the NAD(P)-dependent epimerase/dehydratase family. NAD(+) is required as a cofactor.

It catalyses the reaction UDP-alpha-D-glucose = UDP-alpha-D-galactose. It functions in the pathway carbohydrate metabolism; galactose metabolism. Functionally, catalyzes the interconversion between UDP-glucose and UDP-galactose. This is UDP-glucose 4-epimerase 4 (UGE-4) from Oryza sativa subsp. japonica (Rice).